Reading from the N-terminus, the 1291-residue chain is MAYKIRKINRNVERRDYTKVSMNLSLPNLIGIQTETFEWFKTKGIQEVLDEFFPILSFDGSSVLTLENWGFKEPRLSVRQAKEESKIYDAPIYANLKLSVNKTEEIQKEFDGVVLDDALQILSKWLEEKTVSKNITFKQQSQNSYFFELTIKKSEKPDLIQIDIIEDKKTSLICNVSIYKSGEVFLGDFPLMTEAGTFIINGSQKVIVSQLVRSPGAYFNKELNRKTGEMIYFADIIPSRGTWLEYETDSKKIGNDAINPLYVKIDKSRKTTATSLLLAFGISKDDILNIFDNDEVLVETLQQDSIIGDFKIDWSNQVQEIYKKITQGETATSEGASKFINSILFDKRKYDLTKAGRFKLKQKLSIKNRILNRVIAEDIVDANNNVLIAKDTEVNKHNIKQISEILDQDVMSIDLNYLSDIPGTRKVQKIKVYKDSELKTDTTCLIGLTSSSNEEFITVADILSTVSYLLNLKYNIGEIDDIDNLGNRRVRTVGELLQNQFRMGLNRIDKNVKEKLATSDLYKVKTSTIINAKPLTAIIGEFFNLSQLSQFMDQINPLSELTNKRRLTALGSGGLSRDRAGLEVRDVHPSHYGRICPIETPEGPNIGLINNLSTYARVNEYGFITTPYRKVINGIIQNDQVEYLTADQEKNFIIAQSNVNQDENGKILDEIIVSRFNGDDYMAKVEEIDYIDVSPKQIVSVATSGIPFLENDDANRALMGANMQRQAVPLIKPESPIVATGIEFEAARDSGEAIVAKEDAIVKYVDSKTIITDGESGIRTYILSDYERSNNGTSLTQSPIVKVGDVVKKGEIIADGPSMDQGELAIGQNVVVAFSTYNGYNFEDAIVMSERIVIDDRFTSTHIDEYTLEVRNTKQGQEEVIREIPNMSEQAKRHLDAEGIVAIGTEVKVGDVLVGKVTPKGQVQLSPEDKLLHAIFGEKSRNVKDNSLRVPNGGEGIVQSIKRFKAKSALNPDGIELPADIIEVIKVYVVQKRKIQEGDKMSGRHGNKGIISRILPVEDMPHLEDGTPVDIILNPQGVPSRMNIGQILEIHLGMAAKKLNQKVITPAFEGLNEKELEEIMAEAGMTNYGKVTLIDGQTGEPFDKPIAVGVMYMLKLSHMVDDKIHARNVGPYSLITQQPLGGKAQNGGQRFGEMEVWALEAYGAAHTLREILTIKSDDIKGRSKTYEAIVRSKKIPEPGIPESFNVLSKEIMGLGFNMYMIDETGEKSVINAYDKKNFDADNYEDDEILVKTDTLYIDDEDVDAEFEDLTYVDENDILRSFESENDIDEEE.

Belongs to the RNA polymerase beta chain family. In terms of assembly, the RNAP catalytic core consists of 2 alpha, 1 beta, 1 beta' and 1 omega subunit. When a sigma factor is associated with the core the holoenzyme is formed, which can initiate transcription.

The catalysed reaction is RNA(n) + a ribonucleoside 5'-triphosphate = RNA(n+1) + diphosphate. In terms of biological role, DNA-dependent RNA polymerase catalyzes the transcription of DNA into RNA using the four ribonucleoside triphosphates as substrates. The sequence is that of DNA-directed RNA polymerase subunit beta from Mycoplasma mycoides subsp. mycoides SC (strain CCUG 32753 / NCTC 10114 / PG1).